A 238-amino-acid polypeptide reads, in one-letter code: Probable 2-phosphosulfolactate phosphatase (238 aa).

Belongs to the ComB family. It depends on Mg(2+) as a cofactor.

It catalyses the reaction (2R)-O-phospho-3-sulfolactate + H2O = (2R)-3-sulfolactate + phosphate. This chain is Probable 2-phosphosulfolactate phosphatase, found in Carboxydothermus hydrogenoformans (strain ATCC BAA-161 / DSM 6008 / Z-2901).